The sequence spans 298 residues: Probable 2-(5''-triphosphoribosyl)-3'-dephosphocoenzyme-A synthase 2 (298 aa).

The protein belongs to the CitG/MdcB family.

It carries out the reaction 3'-dephospho-CoA + ATP = 2'-(5''-triphospho-alpha-D-ribosyl)-3'-dephospho-CoA + adenine. This Salmonella choleraesuis (strain SC-B67) protein is Probable 2-(5''-triphosphoribosyl)-3'-dephosphocoenzyme-A synthase 2.